Consider the following 124-residue polypeptide: Holo-[acyl-carrier-protein] synthase (124 aa).

Mg(2+) is bound by residues aspartate 8 and glutamate 58.

This sequence belongs to the P-Pant transferase superfamily. AcpS family. Requires Mg(2+) as cofactor.

Its subcellular location is the cytoplasm. It catalyses the reaction apo-[ACP] + CoA = holo-[ACP] + adenosine 3',5'-bisphosphate + H(+). Transfers the 4'-phosphopantetheine moiety from coenzyme A to a Ser of acyl-carrier-protein. In Lacticaseibacillus casei (strain BL23) (Lactobacillus casei), this protein is Holo-[acyl-carrier-protein] synthase.